A 288-amino-acid polypeptide reads, in one-letter code: Energy-coupling factor transporter ATP-binding protein EcfA2 (288 aa).

Residues isoleucine 3–serine 246 form the ABC transporter domain. Glycine 40–serine 47 is an ATP binding site.

The protein belongs to the ABC transporter superfamily. Energy-coupling factor EcfA family. As to quaternary structure, forms a stable energy-coupling factor (ECF) transporter complex composed of 2 membrane-embedded substrate-binding proteins (S component), 2 ATP-binding proteins (A component) and 2 transmembrane proteins (T component).

It localises to the cell membrane. Functionally, ATP-binding (A) component of a common energy-coupling factor (ECF) ABC-transporter complex. Unlike classic ABC transporters this ECF transporter provides the energy necessary to transport a number of different substrates. This chain is Energy-coupling factor transporter ATP-binding protein EcfA2, found in Listeria welshimeri serovar 6b (strain ATCC 35897 / DSM 20650 / CCUG 15529 / CIP 8149 / NCTC 11857 / SLCC 5334 / V8).